Here is a 207-residue protein sequence, read N- to C-terminus: ATP-dependent Clp protease proteolytic subunit (207 aa).

The active-site Nucleophile is Ser-112. The active site involves His-137.

It belongs to the peptidase S14 family. As to quaternary structure, fourteen ClpP subunits assemble into 2 heptameric rings which stack back to back to give a disk-like structure with a central cavity, resembling the structure of eukaryotic proteasomes.

The protein localises to the cytoplasm. The enzyme catalyses Hydrolysis of proteins to small peptides in the presence of ATP and magnesium. alpha-casein is the usual test substrate. In the absence of ATP, only oligopeptides shorter than five residues are hydrolyzed (such as succinyl-Leu-Tyr-|-NHMec, and Leu-Tyr-Leu-|-Tyr-Trp, in which cleavage of the -Tyr-|-Leu- and -Tyr-|-Trp bonds also occurs).. In terms of biological role, cleaves peptides in various proteins in a process that requires ATP hydrolysis. Has a chymotrypsin-like activity. Plays a major role in the degradation of misfolded proteins. The chain is ATP-dependent Clp protease proteolytic subunit from Bacteroides fragilis (strain ATCC 25285 / DSM 2151 / CCUG 4856 / JCM 11019 / LMG 10263 / NCTC 9343 / Onslow / VPI 2553 / EN-2).